The sequence spans 345 residues: S-adenosylmethionine:tRNA ribosyltransferase-isomerase (345 aa).

The protein belongs to the QueA family. As to quaternary structure, monomer.

The protein localises to the cytoplasm. It carries out the reaction 7-aminomethyl-7-carbaguanosine(34) in tRNA + S-adenosyl-L-methionine = epoxyqueuosine(34) in tRNA + adenine + L-methionine + 2 H(+). It functions in the pathway tRNA modification; tRNA-queuosine biosynthesis. Transfers and isomerizes the ribose moiety from AdoMet to the 7-aminomethyl group of 7-deazaguanine (preQ1-tRNA) to give epoxyqueuosine (oQ-tRNA). This Alkalilimnicola ehrlichii (strain ATCC BAA-1101 / DSM 17681 / MLHE-1) protein is S-adenosylmethionine:tRNA ribosyltransferase-isomerase.